Reading from the N-terminus, the 218-residue chain is THAP domain-containing protein 3 (218 aa).

The THAP-type zinc-finger motif lies at methionine 1–phenylalanine 82. Disordered regions lie at residues glycine 97–proline 120 and alanine 133–proline 154. Serine 100 is modified (phosphoserine). Residues aspartate 156 to tyrosine 159 carry the HCFC1-binding motif (HBM) motif.

In terms of assembly, component of a THAP1/THAP3-HCFC1-OGT complex that contains at least, either THAP1 or THAP3, HCFC1 and OGT. Interacts directly with OGT and HCFC1 (via its HBM). Highest levels in heart, liver and kidney. Lower levels in brain and lung.

In terms of biological role, component of a THAP1/THAP3-HCFC1-OGT complex that is required for the regulation of the transcriptional activity of RRM1. In Mus musculus (Mouse), this protein is THAP domain-containing protein 3 (Thap3).